Consider the following 1091-residue polypeptide: Constitutive coactivator of PPAR-gamma-like protein 2 (1091 aa).

The span at 35–53 (QQQHLHRQLPPAALAPGAP) shows a compositional bias: low complexity. 4 disordered regions span residues 35–105 (QQQH…HPPP), 503–575 (NCLT…SEPH), 966–1010 (SRSS…QGSS), and 1037–1077 (VEEK…KNHV). Arginine 57 is subject to Omega-N-methylarginine. Residues 82–95 (SRHHHPAHHFHHHG) are compositionally biased toward basic residues. Residues 532-544 (GSEQITEAVQQQP) are compositionally biased toward polar residues. A compositionally biased stretch (low complexity) spans 966–976 (SRSSRSRGSFG). Arginine 972 is subject to Omega-N-methylarginine. Positions 1062–1077 (SDDHCLPVKNGEKNHV) are enriched in basic and acidic residues.

It belongs to the constitutive coactivator of PPAR-gamma family.

This Mus musculus (Mouse) protein is Constitutive coactivator of PPAR-gamma-like protein 2 (Fam120c).